Reading from the N-terminus, the 821-residue chain is TORTIFOLIA1-like protein 1 (821 aa).

HEAT repeat units follow at residues 69-110 (PDSP…SYTD), 114-151 (SQLA…QFLK), 163-201 (SSLV…SATE), 205-242 (AAFQ…VGAI), and 245-282 (QSLE…HSSS). Position 406 is a phosphoserine (Ser-406). Disordered stretches follow at residues 416-437 (PSRQ…NTSV) and 553-610 (MSIQ…RAWD). A coiled-coil region spans residues 501-554 (PPLQRQLLHLERQQTHIMNMLQDFMGGSHDGMISLENRVRGLERIVEEMSREMS). The span at 579 to 590 (YGPSSRNTQTST) shows a compositional bias: polar residues.

Expressed at low levels in roots, hypocotyls, stems, flowers, siliques, cotyledons, and leaves. Particularly present in hydathodes of cotyledons and root hairs.

It localises to the cytoplasm. It is found in the cytoskeleton. Plant-specific microtubule-associated protein (MAP) that regulates the orientation of cortical microtubules and the direction of organ growth. The chain is TORTIFOLIA1-like protein 1 from Arabidopsis thaliana (Mouse-ear cress).